A 290-amino-acid chain; its full sequence is 4-hydroxy-3-methylbut-2-enyl diphosphate reductase (290 aa).

Cys12 contributes to the [4Fe-4S] cluster binding site. (2E)-4-hydroxy-3-methylbut-2-enyl diphosphate contacts are provided by His50 and His83. Residues His50 and His83 each coordinate dimethylallyl diphosphate. His50 and His83 together coordinate isopentenyl diphosphate. [4Fe-4S] cluster is bound at residue Cys105. His133 provides a ligand contact to (2E)-4-hydroxy-3-methylbut-2-enyl diphosphate. His133 serves as a coordination point for dimethylallyl diphosphate. His133 contacts isopentenyl diphosphate. Glu135 serves as the catalytic Proton donor. Thr173 contacts (2E)-4-hydroxy-3-methylbut-2-enyl diphosphate. Cys202 is a [4Fe-4S] cluster binding site. The (2E)-4-hydroxy-3-methylbut-2-enyl diphosphate site is built by Ser230, Asn232, and Ser274. Residues Ser230, Asn232, and Ser274 each coordinate dimethylallyl diphosphate. Residues Ser230, Asn232, and Ser274 each contribute to the isopentenyl diphosphate site.

The protein belongs to the IspH family. The cofactor is [4Fe-4S] cluster.

The enzyme catalyses isopentenyl diphosphate + 2 oxidized [2Fe-2S]-[ferredoxin] + H2O = (2E)-4-hydroxy-3-methylbut-2-enyl diphosphate + 2 reduced [2Fe-2S]-[ferredoxin] + 2 H(+). It catalyses the reaction dimethylallyl diphosphate + 2 oxidized [2Fe-2S]-[ferredoxin] + H2O = (2E)-4-hydroxy-3-methylbut-2-enyl diphosphate + 2 reduced [2Fe-2S]-[ferredoxin] + 2 H(+). Its pathway is isoprenoid biosynthesis; dimethylallyl diphosphate biosynthesis; dimethylallyl diphosphate from (2E)-4-hydroxy-3-methylbutenyl diphosphate: step 1/1. The protein operates within isoprenoid biosynthesis; isopentenyl diphosphate biosynthesis via DXP pathway; isopentenyl diphosphate from 1-deoxy-D-xylulose 5-phosphate: step 6/6. In terms of biological role, catalyzes the conversion of 1-hydroxy-2-methyl-2-(E)-butenyl 4-diphosphate (HMBPP) into a mixture of isopentenyl diphosphate (IPP) and dimethylallyl diphosphate (DMAPP). Acts in the terminal step of the DOXP/MEP pathway for isoprenoid precursor biosynthesis. This chain is 4-hydroxy-3-methylbut-2-enyl diphosphate reductase, found in Nitratidesulfovibrio vulgaris (strain DP4) (Desulfovibrio vulgaris).